The primary structure comprises 262 residues: Ribosomal RNA small subunit methyltransferase A (262 aa).

Positions 13, 15, 40, 61, 85, and 105 each coordinate S-adenosyl-L-methionine.

Belongs to the class I-like SAM-binding methyltransferase superfamily. rRNA adenine N(6)-methyltransferase family. RsmA subfamily.

Its subcellular location is the cytoplasm. It carries out the reaction adenosine(1518)/adenosine(1519) in 16S rRNA + 4 S-adenosyl-L-methionine = N(6)-dimethyladenosine(1518)/N(6)-dimethyladenosine(1519) in 16S rRNA + 4 S-adenosyl-L-homocysteine + 4 H(+). In terms of biological role, specifically dimethylates two adjacent adenosines (A1518 and A1519) in the loop of a conserved hairpin near the 3'-end of 16S rRNA in the 30S particle. May play a critical role in biogenesis of 30S subunits. This is Ribosomal RNA small subunit methyltransferase A from Laribacter hongkongensis (strain HLHK9).